The primary structure comprises 452 residues: Membrane-bound acylglycerophosphatidylinositol O-acyltransferase mboa-7 (452 aa).

The next 4 membrane-spanning stretches (helical) occupy residues 4–24, 53–73, 79–99, and 104–124; these read IIGL…FSFA, PRIA…AFAP, FYVF…HYFL, and VASH…GITF. Asparagine 137 is a glycosylation site (N-linked (GlcNAc...) asparagine). 3 helical membrane passes run 153 to 173, 220 to 240, and 244 to 264; these read FAYF…YQML, AIWE…FVVF, and VYSA…GIYP. The N-linked (GlcNAc...) asparagine glycan is linked to asparagine 319. The active site involves histidine 350. Residues 354 to 374 traverse the membrane as a helical segment; sequence AGYFMSFGVVAMCAILEDVIF. Asparagine 414 carries N-linked (GlcNAc...) asparagine glycosylation. The chain crosses the membrane as a helical span at residues 421–441; sequence FWSSIYYWLPLLCVPFYIYSV.

Belongs to the membrane-bound acyltransferase family.

Its subcellular location is the membrane. It catalyses the reaction a 1-acyl-sn-glycero-3-phospho-(1D-myo-inositol) + an acyl-CoA = a 1,2-diacyl-sn-glycero-3-phospho-(1D-myo-inositol) + CoA. The enzyme catalyses a fatty acyl-[ACP] + a 1-acyl-sn-glycero-3-phosphate = a 1,2-diacyl-sn-glycero-3-phosphate + holo-[ACP]. The protein operates within lipid metabolism; phospholipid metabolism. Acyltransferase which mediates the conversion of lysophosphatidylinositol (1-acylglycerophosphatidylinositol or LPI) into phosphatidylinositol (1,2-diacyl-sn-glycero-3-phosphoinositol or PI) (LPIAT activity). Prefers arachidonoyl-CoA or eicosapentaenoic acid (EPA) as the acyl donor. Prefers sn-2-LPI rather than sn-1-LPI as the acyl acceptor. Lysophospholipid acyltransferases (LPLATs) catalyze the reacylation step of the phospholipid remodeling pathway also known as the Lands cycle. In Caenorhabditis briggsae, this protein is Membrane-bound acylglycerophosphatidylinositol O-acyltransferase mboa-7.